The sequence spans 285 residues: Bifunctional protein FolD (285 aa).

NADP(+) is bound by residues Gly-165–Gly-167, Thr-192, and Val-233.

Belongs to the tetrahydrofolate dehydrogenase/cyclohydrolase family. As to quaternary structure, homodimer.

It catalyses the reaction (6R)-5,10-methylene-5,6,7,8-tetrahydrofolate + NADP(+) = (6R)-5,10-methenyltetrahydrofolate + NADPH. The enzyme catalyses (6R)-5,10-methenyltetrahydrofolate + H2O = (6R)-10-formyltetrahydrofolate + H(+). It participates in one-carbon metabolism; tetrahydrofolate interconversion. In terms of biological role, catalyzes the oxidation of 5,10-methylenetetrahydrofolate to 5,10-methenyltetrahydrofolate and then the hydrolysis of 5,10-methenyltetrahydrofolate to 10-formyltetrahydrofolate. The protein is Bifunctional protein FolD of Mycobacterium sp. (strain MCS).